Here is a 169-residue protein sequence, read N- to C-terminus: MRVARLPLLHPHRAAPVVRRQLRGSSLLEMLLVIALIALAGVLAAAALTGGIDGMRLRSAGKAIAAQLRYTRTQAIATGTPQRFLIDPQQRRWEAPGGHHGDLPAALEVRFTGARQVQSRQDQGAIQFFADGASTGGRIDLTIKDARWRVDVGWITGEVRSGPLRTPAP.

A propeptide spans 1-29 (leader sequence); it reads MRVARLPLLHPHRAAPVVRRQLRGSSLLE. The residue at position 30 (methionine 30) is an N-methylmethionine. A helical membrane pass occupies residues 32-52; it reads LVIALIALAGVLAAAALTGGI.

Belongs to the GSP H family. Type II secretion is composed of four main components: the outer membrane complex, the inner membrane complex, the cytoplasmic secretion ATPase and the periplasm-spanning pseudopilus. Interacts with core component XpsG. Interacts with minor pseudopilins XpsI and XpsJ. In terms of processing, cleaved by prepilin peptidase. Post-translationally, methylated by prepilin peptidase at the amino group of the N-terminal phenylalanine once the leader sequence is cleaved by prepilin peptidase.

The protein resides in the cell inner membrane. Component of the type II secretion system required for the energy-dependent secretion of extracellular factors such as proteases and toxins from the periplasm. Part of the pseudopilus tip complex that is critical for the recognition and binding of secretion substrates. This Xanthomonas campestris pv. campestris (strain ATCC 33913 / DSM 3586 / NCPPB 528 / LMG 568 / P 25) protein is Type II secretion system protein H (xpsH).